The chain runs to 314 residues: NAD-dependent protein lipoamidase sirtuin-4, mitochondrial (314 aa).

The N-terminal 28 residues, 1 to 28 (MKMSFALTFRSAKGRWIANPSQPCSKAS), are a transit peptide targeting the mitochondrion. The region spanning 37 to 314 (PPLDPEKVKE…GELLPLIDPC (278 aa)) is the Deacetylase sirtuin-type domain. Residues 62–82 (GAGI…VGLY) and 143–146 (QNVD) contribute to the NAD(+) site. The active-site Proton acceptor is the histidine 161. Zn(2+) is bound by residues cysteine 169, cysteine 172, cysteine 220, and cysteine 223. Residues 260–262 (GSS), 286–288 (NIG), and cysteine 304 contribute to the NAD(+) site.

Belongs to the sirtuin family. Class II subfamily. As to quaternary structure, interacts with GLUD1, IDE and SLC25A5. Interacts with DLAT and PDHX. Interacts with MCCC1 (via the biotin carboxylation domain). Interacts with PCCA and PC. It depends on Zn(2+) as a cofactor. Detected in vascular smooth muscle and striated muscle. Detected in insulin-producing beta-cells in pancreas islets of Langerhans (at protein level). Widely expressed. Weakly expressed in leukocytes and fetal thymus.

Its subcellular location is the mitochondrion matrix. It carries out the reaction N(6)-[(R)-lipoyl]-L-lysyl-[protein] + NAD(+) + H2O = 2''-O-lipoyl-ADP-D-ribose + nicotinamide + L-lysyl-[protein]. The catalysed reaction is N(6)-biotinyl-L-lysyl-[protein] + NAD(+) + H2O = 2''-O-biotinyl-ADP-D-ribose + nicotinamide + L-lysyl-[protein]. It catalyses the reaction N(6)-acetyl-L-lysyl-[protein] + NAD(+) + H2O = 2''-O-acetyl-ADP-D-ribose + nicotinamide + L-lysyl-[protein]. The enzyme catalyses L-cysteinyl-[protein] + NAD(+) = S-(ADP-D-ribosyl)-L-cysteinyl-[protein] + nicotinamide + H(+). Its function is as follows. Acts as a NAD-dependent protein lipoamidase, biotinylase, deacetylase and ADP-ribosyl transferase. Catalyzes more efficiently removal of lipoyl- and biotinyl- than acetyl-lysine modifications. Inhibits the pyruvate dehydrogenase complex (PDH) activity via the enzymatic hydrolysis of the lipoamide cofactor from the E2 component, DLAT, in a phosphorylation-independent manner. Catalyzes the transfer of ADP-ribosyl groups onto target proteins, including mitochondrial GLUD1, inhibiting GLUD1 enzyme activity. Acts as a negative regulator of mitochondrial glutamine metabolism by mediating mono ADP-ribosylation of GLUD1: expressed in response to DNA damage and negatively regulates anaplerosis by inhibiting GLUD1, leading to block metabolism of glutamine into tricarboxylic acid cycle and promoting cell cycle arrest. In response to mTORC1 signal, SIRT4 expression is repressed, promoting anaplerosis and cell proliferation. Acts as a tumor suppressor. Also acts as a NAD-dependent protein deacetylase: mediates deacetylation of 'Lys-471' of MLYCD, inhibiting its activity, thereby acting as a regulator of lipid homeostasis. Does not seem to deacetylate PC. Controls fatty acid oxidation by inhibiting PPARA transcriptional activation. Impairs SIRT1-PPARA interaction probably through the regulation of NAD(+) levels. Down-regulates insulin secretion. This Homo sapiens (Human) protein is NAD-dependent protein lipoamidase sirtuin-4, mitochondrial.